The following is a 184-amino-acid chain: Isopentenyl-diphosphate Delta-isomerase (184 aa).

His25 and His32 together coordinate Mn(2+). One can recognise a Nudix hydrolase domain in the interval 30-164; that stretch reads PLHLAFSCWL…PWAFSPWMVL (135 aa). Cys67 is an active-site residue. A Mn(2+)-binding site is contributed by His69. Glu87 contacts Mg(2+). Mn(2+) is bound by residues Glu114 and Glu116. Glu116 is an active-site residue.

It belongs to the IPP isomerase type 1 family. Homodimer. Requires Mg(2+) as cofactor. Mn(2+) serves as cofactor.

The protein localises to the cytoplasm. The catalysed reaction is isopentenyl diphosphate = dimethylallyl diphosphate. Its pathway is isoprenoid biosynthesis; dimethylallyl diphosphate biosynthesis; dimethylallyl diphosphate from isopentenyl diphosphate: step 1/1. In terms of biological role, catalyzes the 1,3-allylic rearrangement of the homoallylic substrate isopentenyl (IPP) to its highly electrophilic allylic isomer, dimethylallyl diphosphate (DMAPP). The sequence is that of Isopentenyl-diphosphate Delta-isomerase from Klebsiella pneumoniae subsp. pneumoniae (strain ATCC 700721 / MGH 78578).